Consider the following 384-residue polypeptide: Iron(3+)-hydroxamate import system permease protein FhuB (384 aa).

The next 9 membrane-spanning stretches (helical) occupy residues 58–78 (GAVI…FLSI), 115–135 (TAAA…MQGM), 154–174 (FAVS…LVLW), 176–196 (FAGA…SRGG), 202–222 (LALA…AIAI), 243–263 (WSGV…AFFI), 296–316 (VILT…GLII), 330–350 (WIIP…DIAA), and 357–377 (FETP…FYLA).

This sequence belongs to the binding-protein-dependent transport system permease family. FecCD subfamily. As to quaternary structure, the complex is composed of an ATP-binding protein (FhuC), two transmembrane proteins (FhuB and FhuG) and a solute-binding protein (FhuD or YxeB).

It is found in the cell membrane. The protein localises to the membrane raft. Part of the ABC transporter complex FhuBGCD involved in iron(3+)-hydroxamate import. Responsible for the translocation of the substrate across the membrane. This Bacillus subtilis (strain 168) protein is Iron(3+)-hydroxamate import system permease protein FhuB (fhuB).